The chain runs to 27 residues: Flagellar filament 34 kDa core protein (27 aa).

Belongs to the bacterial flagellin family. As to quaternary structure, the flagellum consists of an outer layer composed of repeating units of FlaA around a core that contains one or all of five antigenically related polypeptides.

The protein localises to the periplasmic flagellum. The protein resides in the periplasm. In terms of biological role, component of the core of the flagella. In Spirochaeta aurantia, this protein is Flagellar filament 34 kDa core protein.